We begin with the raw amino-acid sequence, 105 residues long: Small ribosomal subunit protein uS10 (105 aa).

This sequence belongs to the universal ribosomal protein uS10 family. As to quaternary structure, part of the 30S ribosomal subunit.

In terms of biological role, involved in the binding of tRNA to the ribosomes. The chain is Small ribosomal subunit protein uS10 from Rickettsia felis (strain ATCC VR-1525 / URRWXCal2) (Rickettsia azadi).